Consider the following 228-residue polypeptide: Immunogenic protein MPB64 (228 aa).

The first 23 residues, 1–23 (MRIKIFMLVTAVVLLCCSGVATA), serve as a signal peptide directing secretion.

This sequence belongs to the RsiV family.

The protein resides in the secreted. The protein is Immunogenic protein MPB64 (mpb64) of Mycobacterium bovis (strain ATCC BAA-935 / AF2122/97).